The sequence spans 249 residues: Ribitol 2-dehydrogenase (249 aa).

Threonine 20–leucine 43 serves as a coordination point for NAD(+). Tyrosine 160 serves as the catalytic Proton acceptor.

The protein belongs to the short-chain dehydrogenases/reductases (SDR) family. In terms of assembly, homotetramer.

The enzyme catalyses ribitol + NAD(+) = D-ribulose + NADH + H(+). This Klebsiella aerogenes (Enterobacter aerogenes) protein is Ribitol 2-dehydrogenase (rbtD).